Here is a 548-residue protein sequence, read N- to C-terminus: MFS-type transporter TOXA (548 aa).

The segment covering 1–12 (MDEQIVSASSNV) has biased composition (polar residues). A disordered region spans residues 1 to 33 (MDEQIVSASSNVKDGVEKQPVKDREDVDANVVP). The span at 14–27 (DGVEKQPVKDREDV) shows a compositional bias: basic and acidic residues. The next 14 helical transmembrane spans lie at 43-63 (ISLISLFSIVMSLGAAAFLGA), 85-105 (AVAWYGAIYLLMSGTTQPLFG), 114-134 (KWLFITCLIVLQLGSLVCALA), 146-166 (VAGIGAGGILSGALNIVALIV), 177-197 (MIGALECVALIIGPIIGGAIA), 204-224 (WCFWINLPIGAAVCAILLFFF), 250-270 (IGAGMIISSLVCLSLALQWGG), 280-300 (VVALLVVFGVLFLSASGHQYW), 316-336 (GFLLSLFNGLCFGGVQYAALY), 357-377 (MLPIVGAIIGVNIVAGITISF), 382-402 (APFIVIATVLASVGSGLLYTF), 411-431 (IIGYQLIYGAGSGAGVQQAFI), 444-464 (YASASVLLMNSMSGVITLCVC), and 518-538 (FLVAIVLSCASVLGWPFLSWA).

The protein belongs to the major facilitator superfamily. TCR/Tet family.

It localises to the membrane. In terms of biological role, MFS-type transporter; part of the diffuse TOX2 gene cluster that mediates the biosynthesis of the HC-toxin, cyclic tetrapeptide of structure cyclo(D-Pro-L-Ala-D-Ala-L-Aeo), where Aeo stands for 2-amino-9,10-epoxi-8-oxodecanoic acid. HC-toxin is a determinant of specificity and virulence in the interaction between the producing fungus and its host, maize. TOXA acts as a HC-toxin efflux pump which contributes to self-protection against HC-toxin and/or the secretion of HC-toxin into the extracellular milieu. The chain is MFS-type transporter TOXA from Cochliobolus carbonum (Maize leaf spot fungus).